The primary structure comprises 715 residues: MAQGLYHEEFARAGKRAGLQVWRIEKLELVPVPESAYGNFYVGDAYLVLHTTQASRGFTYRLHFWLGKECTQDESTAAAIFTVQMDDYLGGKPVQNRELQGYESTDFVGYFKGGLKYKAGGVASGLNHVLTNDLTAQRLLHVKGRRVVRATEVPLSWDSFNKGDCFIIDLGTEIYQWCGSSCNKYERLKASQVAIGIRDNERKGRAQLIVVEEGSEPSELTKVLGEKPKLRDGEDDDDIKADITNRKMAKLYMVSDASGSMKVSLVAEENPFSMAMLLSEECFILDHGAAKQIFVWKGKDANPQERKAAMKTAEEFLQQMNYSTNTQIQVLPEGGETPIFKQFFKDWRDRDQSDGFGKVYVTEKVAHVKQIPFDASKLHSSPQMAAQHHVVDDGSGKVQIWRVENNGRVEIDRNSYGEFYGGDCYIILYTYPRGQIIYTWQGANATRDELTTSAFLTVQLDRSLGGQAVQIRVSQGKEPAHLLSLFKDKPLIIYKNGTSKKEGQAPAPPIRLFQVRRNLASITRIMEVDVDANSLNSNDVFVLKLRQNNGYIWIGKGSTQEEEKGAEYVASVLKCKTSTIQEGKEPEEFWNSLGGKKDYQTSPLLESQAEDHPPRLYGCSNKTGRFIIEEVPGEFTQDDLAEDDVMLLDAWEQIFIWIGKDANEVEKSESLKSAKIYLETDPSGRDKRTPIVIIKQGHEPPTFTGWFLGWDSSRW.

The tract at residues 1 to 363 is actin-severing; sequence MAQGLYHEEF…DGFGKVYVTE (363 aa). Residues 27–77 form a Gelsolin-like 1 repeat; that stretch reads LELVPVPESAYGNFYVGDAYLVLHTTQASRGFTYRLHFWLGKECTQDESTA. Y102 bears the Phosphotyrosine mark. A 1,2-diacyl-sn-glycero-3-phospho-(1D-myo-inositol-4,5-bisphosphate)-binding positions include 112-119 and 138-146; these read KGGLKYKA and RLLHVKGRR. Gelsolin-like repeat units follow at residues 148 to 188, 265 to 307, 398 to 451, and 523 to 564; these read VRAT…YERL, LVAE…QERK, VQIW…DELT, and TRIM…EEEK. Residues 364-715 are actin-binding, Ca-sensitive; that stretch reads KVAHVKQIPF…WFLGWDSSRW (352 aa). The segment at 364-715 is ca(2+)-dependent actin binding; that stretch reads KVAHVKQIPF…WFLGWDSSRW (352 aa). Ca(2+) is bound by residues N538, D539, and E562. Y599 bears the Phosphotyrosine mark. A Gelsolin-like 6 repeat occupies 626–668; that stretch reads FIIEEVPGEFTQDDLAEDDVMLLDAWEQIFIWIGKDANEVEKS. Ca(2+) contacts are provided by D643, D644, and E666.

The protein belongs to the villin/gelsolin family. The N-terminus is blocked. As to expression, in the adrenal gland, expressed in the medulla but, in the cortex, found only in diffuse parts.

The protein resides in the cytoplasm. The protein localises to the cytoskeleton. It localises to the cell projection. Its subcellular location is the podosome. Its function is as follows. Ca(2+)-dependent actin filament-severing protein that has a regulatory function in exocytosis by affecting the organization of the microfilament network underneath the plasma membrane. In vitro, also has barbed end capping and nucleating activities in the presence of Ca(2+). Severing activity is inhibited by phosphatidylinositol 4,5-bis-phosphate (PIP2). Required for megakaryocyte differentiation, maturation, polyploidization and apoptosis with the release of platelet-like particles. Plays a role in osteoclastogenesis (OCG) and actin cytoskeletal organization in osteoclasts. Regulates chondrocyte proliferation and differentiation. Inhibits cell proliferation and tumorigenesis. Signaling is mediated by MAPK, p38 and JNK pathways. This is Scinderin from Bos taurus (Bovine).